The following is a 255-amino-acid chain: Ribonuclease PH (255 aa).

Phosphate is bound by residues Arg86 and 124–126; that span reads GTR.

The protein belongs to the RNase PH family. As to quaternary structure, homohexameric ring arranged as a trimer of dimers.

It carries out the reaction tRNA(n+1) + phosphate = tRNA(n) + a ribonucleoside 5'-diphosphate. In terms of biological role, phosphorolytic 3'-5' exoribonuclease that plays an important role in tRNA 3'-end maturation. Removes nucleotide residues following the 3'-CCA terminus of tRNAs; can also add nucleotides to the ends of RNA molecules by using nucleoside diphosphates as substrates, but this may not be physiologically important. Probably plays a role in initiation of 16S rRNA degradation (leading to ribosome degradation) during starvation. This Aquifex aeolicus (strain VF5) protein is Ribonuclease PH.